A 741-amino-acid polypeptide reads, in one-letter code: Homeobox protein AHox1 (741 aa).

Disordered regions lie at residues 1–30 (MEKMHSKSVSPVPFNNSNNTSLGGLRKSSS), 61–96 (KRRLLDPQNKKKQNRFERYSSSNHAQEQSSEENFCR), 146–183 (VNPLSKYFKPSSNDQLGARRTATSFSSSSEASDSKSCC), 203–226 (ADSDWSEDATGNEADDPDDHINQD), 357–383 (KTEESLRSPSETKQYSPDASTFYPIRT), 476–501 (FDFPPKFGSNNSSTDKPEQEDNNPQT), and 616–642 (QYGHMSSSQNPHSETQNRSEEVRGTVK). Residues 7–19 (KSVSPVPFNNSNN) show a composition bias toward low complexity. A compositionally biased stretch (basic and acidic residues) spans 63 to 78 (RLLDPQNKKKQNRFER). Polar residues predominate over residues 79 to 92 (YSSSNHAQEQSSEE). A compositionally biased stretch (low complexity) spans 169–181 (SFSSSSEASDSKS). The span at 363 to 375 (RSPSETKQYSPDA) shows a compositional bias: polar residues. Residues 616-629 (QYGHMSSSQNPHSE) are compositionally biased toward polar residues. A compositionally biased stretch (basic and acidic residues) spans 630–639 (TQNRSEEVRG). The homeobox DNA-binding region spans 645–704 (RKWNRAVFSLMQRRGLEKSFQSQKYVAKPERRKLADALSLTDAQVKIWFQNRRMKWRQEI). The interval 722 to 741 (EIEKEKTQTPSDEGEVINVD) is disordered.

The protein belongs to the H2.0 homeobox family. In terms of tissue distribution, expressed in the tissues of endodermal origin.

The protein resides in the nucleus. The protein is Homeobox protein AHox1 (AHOX1) of Halocynthia roretzi (Sea squirt).